The sequence spans 346 residues: tRNA N6-adenosine threonylcarbamoyltransferase (346 aa).

Positions 111 and 115 each coordinate Fe cation. Substrate-binding positions include 134-138 (LVSGG), aspartate 167, glycine 180, and asparagine 277. Aspartate 305 serves as a coordination point for Fe cation.

It belongs to the KAE1 / TsaD family. Fe(2+) is required as a cofactor.

It is found in the cytoplasm. It carries out the reaction L-threonylcarbamoyladenylate + adenosine(37) in tRNA = N(6)-L-threonylcarbamoyladenosine(37) in tRNA + AMP + H(+). Its function is as follows. Required for the formation of a threonylcarbamoyl group on adenosine at position 37 (t(6)A37) in tRNAs that read codons beginning with adenine. Is involved in the transfer of the threonylcarbamoyl moiety of threonylcarbamoyl-AMP (TC-AMP) to the N6 group of A37, together with TsaE and TsaB. TsaD likely plays a direct catalytic role in this reaction. In Bordetella parapertussis (strain 12822 / ATCC BAA-587 / NCTC 13253), this protein is tRNA N6-adenosine threonylcarbamoyltransferase.